The chain runs to 550 residues: Glucose-6-phosphate isomerase 2 (550 aa).

The active-site Proton donor is E359. Residues H390 and K514 contribute to the active site.

Belongs to the GPI family.

It is found in the cytoplasm. It carries out the reaction alpha-D-glucose 6-phosphate = beta-D-fructose 6-phosphate. It functions in the pathway carbohydrate biosynthesis; gluconeogenesis. It participates in carbohydrate degradation; glycolysis; D-glyceraldehyde 3-phosphate and glycerone phosphate from D-glucose: step 2/4. Its function is as follows. Catalyzes the reversible isomerization of glucose-6-phosphate to fructose-6-phosphate. In Streptomyces avermitilis (strain ATCC 31267 / DSM 46492 / JCM 5070 / NBRC 14893 / NCIMB 12804 / NRRL 8165 / MA-4680), this protein is Glucose-6-phosphate isomerase 2.